A 346-amino-acid polypeptide reads, in one-letter code: Prepilin peptidase EppA (346 aa).

Helical transmembrane passes span 1–21, 31–51, 56–76, 77–97, 101–121, 128–148, 149–169, 182–202, 206–226, and 321–341; these read MFGF…LILT, IIPH…GYYF, AITS…GMGG, GDVK…IYFV, ISIL…TKIL, IIPS…ITEI, YSIG…IFIS, LGYI…AYFV, VLIS…VIYA, and PFVP…MGVI.

Belongs to the peptidase A24 family.

Its subcellular location is the cell membrane. Peptidase that processes the N-terminus of prepilins. Specifically cleaves proteins with a class III (type IV pilin-like) signal sequence, such as the major structural pilin EpdE and the minor pilins EpdA, EpdC and EpdD. Is not able to cleave the preflagellin subunit FlaB2. The protein is Prepilin peptidase EppA of Methanococcus maripaludis (strain DSM 14266 / JCM 13030 / NBRC 101832 / S2 / LL).